The following is a 152-amino-acid chain: MAAQLLFTDEEVTEFKRRFKNKDTDKSKSITAEELGEFFKSTGKSYTDKQIDKMISDVDTDESGTIDFSEMLMGIAEQMVKWTWKEEHYTKAFDDMDKDGNGSLSPQELREALSASKPPMKRKKIKAIIQKADANKDGKIDREEFMKLIKSC.

4 consecutive EF-hand domains span residues 10–45, 46–81, 84–119, and 120–152; these read EEVTEFKRRFKNKDTDKSKSITAEELGEFFKSTGKS, YTDKQIDKMISDVDTDESGTIDFSEMLMGIAEQMVK, WKEEHYTKAFDDMDKDGNGSLSPQELREALSASKPP, and MKRKKIKAIIQKADANKDGKIDREEFMKLIKSC. The Ca(2+) site is built by aspartate 23, aspartate 25, serine 27, serine 29, glutamate 34, aspartate 59, aspartate 61, serine 63, threonine 65, glutamate 70, aspartate 97, aspartate 99, asparagine 101, serine 103, glutamate 108, aspartate 133, asparagine 135, aspartate 137, lysine 139, and glutamate 144. Residues 95–121 are disordered; sequence DMDKDGNGSLSPQELREALSASKPPMK.

As to expression, found in cell lineages giving rise to the aboral ectoderm, a squamous epithelium covering the surface of the late stage embryo and larva.

Its function is as follows. Calcium-binding protein involved in larval development and metamorphosis. Likely to function as calcium buffers mediating the transport of calcium from the sea water to the blastocoel where calcium is required for skeleton formation. The chain is Calcium-binding protein SPEC 1A (SPEC1) from Strongylocentrotus purpuratus (Purple sea urchin).